Here is a 210-residue protein sequence, read N- to C-terminus: Thymidylate kinase (210 aa).

11–18 (GVDGAGKT) serves as a coordination point for ATP.

The protein belongs to the thymidylate kinase family.

It carries out the reaction dTMP + ATP = dTDP + ADP. Its function is as follows. Phosphorylation of dTMP to form dTDP in both de novo and salvage pathways of dTTP synthesis. The chain is Thymidylate kinase (tmk) from Mycoplasma genitalium (strain ATCC 33530 / DSM 19775 / NCTC 10195 / G37) (Mycoplasmoides genitalium).